A 513-amino-acid chain; its full sequence is ATP synthase subunit alpha 2 (513 aa).

ATP is bound at residue 152 to 159; it reads GDSKTGKT.

This sequence belongs to the ATPase alpha/beta chains family. F-type ATPases have 2 components, CF(1) - the catalytic core - and CF(0) - the membrane proton channel. CF(1) has five subunits: alpha(3), beta(3), gamma(1), delta(1), epsilon(1). CF(0) has three main subunits: a(1), b(2) and c(9-12). The alpha and beta chains form an alternating ring which encloses part of the gamma chain. CF(1) is attached to CF(0) by a central stalk formed by the gamma and epsilon chains, while a peripheral stalk is formed by the delta and b chains.

The protein resides in the cell membrane. The enzyme catalyses ATP + H2O + 4 H(+)(in) = ADP + phosphate + 5 H(+)(out). Its function is as follows. Produces ATP from ADP in the presence of a proton gradient across the membrane. The alpha chain is a regulatory subunit. The sequence is that of ATP synthase subunit alpha 2 from Mycoplasmopsis pulmonis (strain UAB CTIP) (Mycoplasma pulmonis).